Consider the following 544-residue polypeptide: GMP synthase [glutamine-hydrolyzing] (544 aa).

Residues 12-210 (TILILDFGSQ…VKNVCGVRDG (199 aa)) enclose the Glutamine amidotransferase type-1 domain. C88 functions as the Nucleophile in the catalytic mechanism. Catalysis depends on residues H184 and E186. The 209-residue stretch at 211–419 (WSMESFIPKE…LNIPEHLVGR (209 aa)) folds into the GMPS ATP-PPase domain. 239-245 (SGGVDST) serves as a coordination point for ATP. XMP-binding residues include R312, D481, K536, and E542.

As to quaternary structure, homodimer. Also forms a small population of homotetramers. The cofactor is Mg(2+).

The protein localises to the cytoplasm. It is found in the cytosol. The enzyme catalyses XMP + L-glutamine + ATP + H2O = GMP + L-glutamate + AMP + diphosphate + 2 H(+). It participates in purine metabolism; GMP biosynthesis; GMP from XMP (L-Gln route): step 1/1. Its activity is regulated as follows. The enzyme is inhibited by ECC1385; although this compound fails to inhibit growth of the organism. Catalyzes the conversion of xanthine monophosphate (XMP) to GMP in the presence of glutamine and ATP through an adenyl-XMP intermediate. The polypeptide is GMP synthase [glutamine-hydrolyzing] (Cryptococcus neoformans var. grubii serotype A (strain H99 / ATCC 208821 / CBS 10515 / FGSC 9487) (Filobasidiella neoformans var. grubii)).